Reading from the N-terminus, the 167-residue chain is Golgin subfamily A member 7B (167 aa).

S-palmitoyl cysteine attachment occurs at residues Cys-78 and Cys-81. A disordered region spans residues 140-167 (RCSSGSSSSGSSSGSGSSSAGGGGAGAR). Over residues 142 to 157 (SSGSSSSGSSSGSGSS) the composition is skewed to low complexity. The span at 158–167 (SAGGGGAGAR) shows a compositional bias: gly residues.

The protein belongs to the ERF4 family. In terms of processing, palmitoylated by ZDHHC5. Palmitoylation is required for the maintenance of ZDHHC5 at the plasma membrane.

Its subcellular location is the cell membrane. The protein resides in the golgi apparatus membrane. Play a role in cell adhesion by regulating the plasma membrane localization of the palmitoyltransferase ZDHHC5. May be involved in protein transport from Golgi to cell surface. The protein is Golgin subfamily A member 7B (GOLGA7B) of Mus musculus (Mouse).